We begin with the raw amino-acid sequence, 298 residues long: Biphenyl-2,3-diol 1,2-dioxygenase (298 aa).

VOC domains lie at 5 to 119 (SLGY…IYYG) and 143 to 264 (GLGH…YGWS). His146, His210, and Glu260 together coordinate Fe cation.

This sequence belongs to the extradiol ring-cleavage dioxygenase family. In terms of assembly, homooctamer. The enzyme is composed of two planar tetramers rotated at 45 degrees relative to each other, with a channel in the middle. Requires Fe(2+) as cofactor.

It carries out the reaction biphenyl-2,3-diol + O2 = 2-hydroxy-6-oxo-6-phenylhexa-2,4-dienoate + H(+). The protein operates within xenobiotic degradation; biphenyl degradation; 2-hydroxy-2,4-pentadienoate and benzoate from biphenyl: step 3/4. Shows a preference for catechols with groups immediately adjacent to the hydroxyl substituents. This is Biphenyl-2,3-diol 1,2-dioxygenase (bphC) from Paraburkholderia xenovorans (strain LB400).